Reading from the N-terminus, the 447-residue chain is Methylenetetrahydrofolate--tRNA-(uracil-5-)-methyltransferase TrmFO (447 aa).

8-13 (GGGLAG) lines the FAD pocket. Residues 398-421 (NWGLVPAPPKRENGRRLGRQERRR) form a disordered region. Basic and acidic residues predominate over residues 406–417 (PKRENGRRLGRQ).

Belongs to the MnmG family. TrmFO subfamily. FAD serves as cofactor.

The protein resides in the cytoplasm. It catalyses the reaction uridine(54) in tRNA + (6R)-5,10-methylene-5,6,7,8-tetrahydrofolate + NADH + H(+) = 5-methyluridine(54) in tRNA + (6S)-5,6,7,8-tetrahydrofolate + NAD(+). It carries out the reaction uridine(54) in tRNA + (6R)-5,10-methylene-5,6,7,8-tetrahydrofolate + NADPH + H(+) = 5-methyluridine(54) in tRNA + (6S)-5,6,7,8-tetrahydrofolate + NADP(+). Functionally, catalyzes the folate-dependent formation of 5-methyl-uridine at position 54 (M-5-U54) in all tRNAs. The polypeptide is Methylenetetrahydrofolate--tRNA-(uracil-5-)-methyltransferase TrmFO (Rubrobacter xylanophilus (strain DSM 9941 / JCM 11954 / NBRC 16129 / PRD-1)).